The chain runs to 410 residues: Sulfate adenylyltransferase (410 aa).

It belongs to the sulfate adenylyltransferase family.

It catalyses the reaction sulfate + ATP + H(+) = adenosine 5'-phosphosulfate + diphosphate. Its pathway is sulfur metabolism; hydrogen sulfide biosynthesis; sulfite from sulfate: step 1/3. The polypeptide is Sulfate adenylyltransferase (Syntrophobacter fumaroxidans (strain DSM 10017 / MPOB)).